A 217-amino-acid chain; its full sequence is Cytidylate kinase (217 aa).

Residue 10–18 coordinates ATP; it reads GPAGAGKST.

This sequence belongs to the cytidylate kinase family. Type 1 subfamily.

Its subcellular location is the cytoplasm. It carries out the reaction CMP + ATP = CDP + ADP. The enzyme catalyses dCMP + ATP = dCDP + ADP. This chain is Cytidylate kinase, found in Clostridium botulinum (strain Loch Maree / Type A3).